Reading from the N-terminus, the 263-residue chain is MAKVISFFISLFLISFPLYANDYFRADSRTPDEVRRSGGLIPRGQDEAYERGTPININLYDHARGTATGNTRYNDGYVSTTTTLRQAHFLGQNMLGGYNEYYIYVVAAAPNLFDVNGVLGRYSPYPSENEYAALGGIPLSQIIGWYRVSFGAIEGGMHRNRDYRRDLFRGLSAAPNEDGYRIAGFPDGFPAWEEVPWREFAPNSCLPNNKASSDTTCASLTNKLSQHDLADFKKYIKRKFTLMTLLSINNDGFFSNNGGKDEL.

Residues Met-1–Ala-20 form the signal peptide. Ala-26–Gly-39 contacts NAD(+). The active site involves Glu-130. Cys-205 and Cys-217 are joined by a disulfide.

Belongs to the enterotoxin A family. Heterohexamer of one A chain and of five B chains.

The biological activity of the toxin is produced by the A chain, which activates intracellular adenyl cyclase. The polypeptide is Heat-labile enterotoxin IIB, A chain (Escherichia coli).